The chain runs to 350 residues: Biotin synthase (350 aa).

In terms of domain architecture, Radical SAM core spans 54-278 (REIQLSTLLS…TMPQSYVRLS (225 aa)). Residues Cys69, Cys73, and Cys76 each contribute to the [4Fe-4S] cluster site. 4 residues coordinate [2Fe-2S] cluster: Cys113, Cys144, Cys204, and Arg276.

It belongs to the radical SAM superfamily. Biotin synthase family. As to quaternary structure, homodimer. [4Fe-4S] cluster serves as cofactor. [2Fe-2S] cluster is required as a cofactor.

It carries out the reaction (4R,5S)-dethiobiotin + (sulfur carrier)-SH + 2 reduced [2Fe-2S]-[ferredoxin] + 2 S-adenosyl-L-methionine = (sulfur carrier)-H + biotin + 2 5'-deoxyadenosine + 2 L-methionine + 2 oxidized [2Fe-2S]-[ferredoxin]. It participates in cofactor biosynthesis; biotin biosynthesis; biotin from 7,8-diaminononanoate: step 2/2. Its function is as follows. Catalyzes the conversion of dethiobiotin (DTB) to biotin by the insertion of a sulfur atom into dethiobiotin via a radical-based mechanism. The protein is Biotin synthase of Neisseria meningitidis serogroup B (strain ATCC BAA-335 / MC58).